The primary structure comprises 215 residues: Ras-related protein Rab-5A (215 aa).

GTP is bound by residues Ser29, Ala30, Gly32, Lys33, Ser34, Ser35, His46, Glu47, Thr52, and Gly78. Ser34 contributes to the Mg(2+) binding site. Short sequence motifs (switch) lie at residues 44 to 56 and 77 to 93; these read QFHEFQESTIGAA and AGQERYHSLAPMYYRGA. Thr52 contacts Mg(2+). Ser84 is subject to Phosphoserine. 5 residues coordinate GTP: Asn133, Lys134, Asp136, Ala164, and Lys165. Positions 181–215 are disordered; that stretch reads LPKNEPQNPGANSARGRGVDLTEPAQPARSQCCSN. 2 S-geranylgeranyl cysteine lipidation sites follow: Cys212 and Cys213.

The protein belongs to the small GTPase superfamily. Rab family. In terms of assembly, interacts with GDI1; this promotes dissociation from membranes; phosphorylation at Ser-84 disrupts this interaction. Interacts with GDI2; phosphorylation at Ser-84 disrupts the interaction. Interacts with EEA1. Interacts with RIN1 and GAPVD1, which regulate its pathway, probably by acting as a GEF. Interacts with RINL. Interacts with ALS2CL, SUN2, ZFYVE20 and RUFY1. Interacts with RABEP1; one RABEP1 homodimer binds two RAB5A chains, but at opposite sides of the dimer. Interacts with SGSM1 and SGSM3. Interacts with PIK3CB. Interacts with OCRL and INPP5F. May be a component of a complex composed of RAB5A, DYN2 and PIK3C3. Does not interact with BLOC-3 complex (heterodimer of HPS1 and HPS4). Interacts with CLN5. Interacts with APPL2. Interacts with F8A1/F8A2/F8A3. Found in a complex with F8A1/F8A2/F8A3, HTT and RAB5A; mediates the recruitment of HTT by RAB5A onto early endosomes. Interacts with ATP9A. Interacts with PPP1R21; mediates the recruitment of FERRY complex by RAB5A onto early endosomes. The cofactor is Mg(2+). Phosphorylation of Ser-84 in the switch II region by LRRK2 prevents the association of RAB regulatory proteins, including RAB GDP dissociation inhibitors GDI1 and GDI2.

The protein resides in the cell membrane. It is found in the early endosome membrane. Its subcellular location is the melanosome. It localises to the cytoplasmic vesicle. The protein localises to the cell projection. The protein resides in the ruffle. It is found in the membrane. Its subcellular location is the cytoplasm. It localises to the cytosol. The protein localises to the phagosome membrane. The protein resides in the endosome membrane. The catalysed reaction is GTP + H2O = GDP + phosphate + H(+). Regulated by guanine nucleotide exchange factors (GEFs) including RINL, which promote the exchange of bound GDP for free GTP. Regulated by GTPase activating proteins (GAPs) which increase the GTP hydrolysis activity. Inhibited by GDP dissociation inhibitors (GDIs). Functionally, the small GTPases Rab are key regulators of intracellular membrane trafficking, from the formation of transport vesicles to their fusion with membranes. Rabs cycle between an inactive GDP-bound form and an active GTP-bound form that is able to recruit to membranes different sets of downstream effectors directly responsible for vesicle formation, movement, tethering and fusion. RAB5A is required for the fusion of plasma membranes and early endosomes. Contributes to the regulation of filopodia extension. Required for the exosomal release of SDCBP, CD63, PDCD6IP and syndecan. Regulates maturation of apoptotic cell-containing phagosomes, probably downstream of DYN2 and PIK3C3. In Mus musculus (Mouse), this protein is Ras-related protein Rab-5A.